A 247-amino-acid polypeptide reads, in one-letter code: L-cystine import ATP-binding protein TcyC (247 aa).

The region spanning 2–240 (LTVKGLNKSF…PKEERTQRFL (239 aa)) is the ABC transporter domain. Position 34–41 (34–41 (GPSGSGKT)) interacts with ATP.

Belongs to the ABC transporter superfamily. L-cystine importer (TC 3.A.1.3.14) family. As to quaternary structure, the complex is composed of two ATP-binding proteins (TcyC), two transmembrane proteins (TcyB) and a solute-binding protein (TcyA).

It localises to the cell membrane. In terms of biological role, part of the ABC transporter complex TcyABC involved in L-cystine import. Responsible for energy coupling to the transport system. This chain is L-cystine import ATP-binding protein TcyC (tcyC), found in Bacillus subtilis (strain 168).